Reading from the N-terminus, the 313-residue chain is MEPRNQTSASQFILLGLSEKPEQETLLFSLFFCMYLVMVVGNLLIILAISIDSHLHTPMYFFLANLSLVDFCLATNTIPKMLVSLQTGSKAISYPCCLIQMYFFHFFGIVDSVIIAMMAYDRFVAICHPLHYAKIMSLRLCRLLVGALWAFSCFISLTHILLMARLVFCGSHEVPHYFCDLTPILRLSCTDTSVNRIFILIVAGMVIATPFVCILASYARILVAIMKVPSAGGRKKAFSTCSSHLSVVALFYGTTIGVYLCPSSVLTTVKEKASAVMYTAVTPMLNPFIYSLRNRDLKGALRKLVNRKITSSS.

The Extracellular portion of the chain corresponds to 1 to 25; that stretch reads MEPRNQTSASQFILLGLSEKPEQET. An N-linked (GlcNAc...) asparagine glycan is attached at Asn-5. A helical transmembrane segment spans residues 26–49; the sequence is LLFSLFFCMYLVMVVGNLLIILAI. The Cytoplasmic portion of the chain corresponds to 50 to 57; the sequence is SIDSHLHT. Residues 58–79 form a helical membrane-spanning segment; sequence PMYFFLANLSLVDFCLATNTIP. Residues 80–100 are Extracellular-facing; that stretch reads KMLVSLQTGSKAISYPCCLIQ. Cysteines 97 and 189 form a disulfide. A helical transmembrane segment spans residues 101 to 120; that stretch reads MYFFHFFGIVDSVIIAMMAY. At 121 to 139 the chain is on the cytoplasmic side; sequence DRFVAICHPLHYAKIMSLR. The chain crosses the membrane as a helical span at residues 140–158; the sequence is LCRLLVGALWAFSCFISLT. Residues 159–196 are Extracellular-facing; the sequence is HILLMARLVFCGSHEVPHYFCDLTPILRLSCTDTSVNR. The helical transmembrane segment at 197–219 threads the bilayer; the sequence is IFILIVAGMVIATPFVCILASYA. Residues 220–236 are Cytoplasmic-facing; it reads RILVAIMKVPSAGGRKK. A helical membrane pass occupies residues 237 to 259; it reads AFSTCSSHLSVVALFYGTTIGVY. Residues 260-272 lie on the Extracellular side of the membrane; sequence LCPSSVLTTVKEK. A helical membrane pass occupies residues 273–292; that stretch reads ASAVMYTAVTPMLNPFIYSL. The Cytoplasmic segment spans residues 293–313; it reads RNRDLKGALRKLVNRKITSSS.

The protein belongs to the G-protein coupled receptor 1 family.

It is found in the cell membrane. Odorant receptor. The sequence is that of Olfactory receptor 1M1 from Homo sapiens (Human).